A 246-amino-acid polypeptide reads, in one-letter code: Probable transcriptional regulatory protein Teth39_1009 (246 aa).

The segment at 1–21 is disordered; sequence MSGHSKWANIKHKKEKMDAKK.

Belongs to the TACO1 family.

The protein localises to the cytoplasm. The chain is Probable transcriptional regulatory protein Teth39_1009 from Thermoanaerobacter pseudethanolicus (strain ATCC 33223 / 39E) (Clostridium thermohydrosulfuricum).